The following is a 292-amino-acid chain: Protein sarah (292 aa).

Positions methionine 1–arginine 51 are enriched in low complexity. The segment at methionine 1–phenylalanine 111 is disordered. 3 positions are modified to phosphoserine: serine 67, serine 72, and serine 100. Acidic residues predominate over residues valine 98–phenylalanine 111. Phosphothreonine occurs at positions 102 and 196. Phosphoserine occurs at positions 215 and 219. Phosphothreonine is present on threonine 246.

The protein belongs to the RCAN family. Interacts with Pp2B-14D, CanA-14F and CanB2. In terms of processing, phosphorylation at Ser-215 and Ser-219 is essential for calcineurin activation and completion of female meiosis. Sgg is required for phosphorylation of Ser-215 in activated eggs. Ser-100, Thr-102 and Ser-219 are highly phosphorylated in both ovaries and activated eggs; however, phosphorylation at Ser-100 or Thr-102 is not required for sra function in completion of female meiosis. Expressed in central nervous system of the third instar larvae, with a relatively intense signal in the brain and weak signals in the ventral ganglion. Relatively low, but ubiquitous expression level is observed in leg and wing imaginal disks, no signal is detected in the eye-antennal disks. Expressed in all neurons in the adult brain.

Functionally, required for elongation of meiosis I spindle. Critical for ovulation, meiotic progression in oocytes and female courtship behavior, including their postmating changes. Regulates female meiosis by controlling calcineurin activity in the germline. Has a role in calcium signaling during egg activation; bcd mRNA polyadenylation and translation in the oocyte. This chain is Protein sarah (sra), found in Drosophila melanogaster (Fruit fly).